A 266-amino-acid chain; its full sequence is 3-methyl-2-oxobutanoate hydroxymethyltransferase (266 aa).

Residues Asp-45 and Asp-84 each contribute to the Mg(2+) site. 3-methyl-2-oxobutanoate contacts are provided by residues Asp-45–Ser-46, Asp-84, and Lys-112. Position 114 (Glu-114) interacts with Mg(2+). The Proton acceptor role is filled by Glu-181.

This sequence belongs to the PanB family. Homodecamer; pentamer of dimers. Mg(2+) is required as a cofactor.

The protein resides in the cytoplasm. The catalysed reaction is 3-methyl-2-oxobutanoate + (6R)-5,10-methylene-5,6,7,8-tetrahydrofolate + H2O = 2-dehydropantoate + (6S)-5,6,7,8-tetrahydrofolate. The protein operates within cofactor biosynthesis; (R)-pantothenate biosynthesis; (R)-pantoate from 3-methyl-2-oxobutanoate: step 1/2. Catalyzes the reversible reaction in which hydroxymethyl group from 5,10-methylenetetrahydrofolate is transferred onto alpha-ketoisovalerate to form ketopantoate. In Pseudomonas putida (strain ATCC 700007 / DSM 6899 / JCM 31910 / BCRC 17059 / LMG 24140 / F1), this protein is 3-methyl-2-oxobutanoate hydroxymethyltransferase.